The sequence spans 92 residues: Probable Fe(2+)-trafficking protein (92 aa).

Belongs to the Fe(2+)-trafficking protein family.

Could be a mediator in iron transactions between iron acquisition and iron-requiring processes, such as synthesis and/or repair of Fe-S clusters in biosynthetic enzymes. This Shewanella woodyi (strain ATCC 51908 / MS32) protein is Probable Fe(2+)-trafficking protein.